We begin with the raw amino-acid sequence, 425 residues long: Elongation factor 1-alpha (425 aa).

Residues 5 to 221 (KPHMNLAVIG…DTFKEPSKPT (217 aa)) enclose the tr-type G domain. The G1 stretch occupies residues 14–21 (GHIDHGKS). GTP is bound at residue 14–21 (GHIDHGKS). S21 is a Mg(2+) binding site. Residues 70 to 74 (GITID) are G2. The segment at 91 to 94 (DCPG) is G3. GTP-binding positions include 91-95 (DCPGH) and 146-149 (NKMD). The G4 stretch occupies residues 146–149 (NKMD). The G5 stretch occupies residues 185–187 (SSL).

It belongs to the TRAFAC class translation factor GTPase superfamily. Classic translation factor GTPase family. EF-Tu/EF-1A subfamily.

The protein localises to the cytoplasm. It catalyses the reaction GTP + H2O = GDP + phosphate + H(+). Functionally, GTP hydrolase that promotes the GTP-dependent binding of aminoacyl-tRNA to the A-site of ribosomes during protein biosynthesis. The sequence is that of Elongation factor 1-alpha from Methanoregula boonei (strain DSM 21154 / JCM 14090 / 6A8).